We begin with the raw amino-acid sequence, 396 residues long: Flap endonuclease 1 (396 aa).

Positions 1-104 (MGIKHLYQLI…GELAKRFQRK (104 aa)) are N-domain. Residue Asp-34 participates in Mg(2+) binding. Residues Arg-47 and Arg-70 each coordinate DNA. Mg(2+) contacts are provided by Asp-86, Glu-158, Glu-160, Asp-179, and Asp-181. Residues 122-255 (DVEKFSRRTV…STALKLIRDH (134 aa)) form an I-domain region. Glu-158 contacts DNA. Gly-233 and Asp-235 together coordinate DNA. Asp-235 contacts Mg(2+). The disordered stretch occupies residues 338–396 (MKSAQQSRLEGFFKPVERTPEEKASLKRKADEKLSEKKKKQKEEAKAKKQAKSKPRTAG). Positions 342-350 (QQSRLEGFF) are interaction with PCNA. Basic and acidic residues predominate over residues 352 to 384 (PVERTPEEKASLKRKADEKLSEKKKKQKEEAKA). Basic residues predominate over residues 385 to 396 (KKQAKSKPRTAG).

The protein belongs to the XPG/RAD2 endonuclease family. FEN1 subfamily. In terms of assembly, interacts with PCNA. Three molecules of FEN1 bind to one PCNA trimer with each molecule binding to one PCNA monomer. PCNA stimulates the nuclease activity without altering cleavage specificity. It depends on Mg(2+) as a cofactor. Post-translationally, phosphorylated. Phosphorylation upon DNA damage induces relocalization to the nuclear plasma.

The protein localises to the nucleus. It localises to the nucleolus. It is found in the nucleoplasm. Its subcellular location is the mitochondrion. Functionally, structure-specific nuclease with 5'-flap endonuclease and 5'-3' exonuclease activities involved in DNA replication and repair. During DNA replication, cleaves the 5'-overhanging flap structure that is generated by displacement synthesis when DNA polymerase encounters the 5'-end of a downstream Okazaki fragment. It enters the flap from the 5'-end and then tracks to cleave the flap base, leaving a nick for ligation. Also involved in the long patch base excision repair (LP-BER) pathway, by cleaving within the apurinic/apyrimidinic (AP) site-terminated flap. Acts as a genome stabilization factor that prevents flaps from equilibrating into structures that lead to duplications and deletions. Also possesses 5'-3' exonuclease activity on nicked or gapped double-stranded DNA, and exhibits RNase H activity. Also involved in replication and repair of rDNA and in repairing mitochondrial DNA. The polypeptide is Flap endonuclease 1 (Phaeosphaeria nodorum (strain SN15 / ATCC MYA-4574 / FGSC 10173) (Glume blotch fungus)).